We begin with the raw amino-acid sequence, 114 residues long: NLP effector protein 1 (114 aa).

The protein belongs to the Necrosis inducing protein (NPP1) family.

It localises to the secreted. It is found in the host cytoplasm. Probable secreted effector that may act as a pathogen-associated molecular pattern (PAMP) recognized by the plant immune system. Seems not to induce necrosis, neither in several susceptible or resistant Vitis species nor in the dicot model plant Nicotiana benthamiana. This is NLP effector protein 1 from Plasmopara viticola (Downy mildew of grapevine).